Reading from the N-terminus, the 505-residue chain is uncharacterized protein (505 aa).

The segment covering 1-16 has biased composition (polar residues); sequence MPPTASLTRSPPTASQ. Positions 1-474 are disordered; that stretch reads MPPTASLTRS…TPPTASLTRT (474 aa). 2 stretches are compositionally biased toward low complexity: residues 17–33 and 40–59; these read TRTL…PRAS and TASL…PPRA. Residues 66-78 are compositionally biased toward polar residues; the sequence is SRASLTRTLSRAS. Low complexity-rich tracts occupy residues 96–122, 129–140, and 147–158; these read SLTR…PPRT, PRTSQTRTPPRA, and SRASRTRTPPRA. Composition is skewed to polar residues over residues 165 to 177 and 188 to 200; these read SRAS…SRAS and TRTP…TRTP. Over residues 201-226 the composition is skewed to low complexity; sequence PTASLTRASRTRTPPRTSQTRTPPRA. Polar residues-rich tracts occupy residues 233–254, 265–293, 309–329, 345–365, 373–383, 399–408, and 435–448; these read SRAS…SRAS, TRTP…SLTR, LTRT…SLTR, TRTPSRASLTR, LTRSPPTASL, and LTRS…TRTP. The span at 453 to 474 shows a compositional bias: low complexity; sequence LRRTPPRTSLTRTPPTASLTRT.

This is an uncharacterized protein from Homo sapiens (Human).